Consider the following 275-residue polypeptide: Phosphatidylglycerol--prolipoprotein diacylglyceryl transferase (275 aa).

Transmembrane regions (helical) follow at residues 18 to 38 (IEVH…YFIA), 55 to 75 (IIFW…VIFQ), and 89 to 109 (IWHG…TGVI). Position 137 (Arg137) interacts with a 1,2-diacyl-sn-glycero-3-phospho-(1'-sn-glycerol). 2 helical membrane-spanning segments follow: residues 203 to 223 (IGET…FVEG) and 235 to 255 (IRVA…MIIY).

Belongs to the Lgt family.

Its subcellular location is the cell membrane. The enzyme catalyses L-cysteinyl-[prolipoprotein] + a 1,2-diacyl-sn-glycero-3-phospho-(1'-sn-glycerol) = an S-1,2-diacyl-sn-glyceryl-L-cysteinyl-[prolipoprotein] + sn-glycerol 1-phosphate + H(+). It functions in the pathway protein modification; lipoprotein biosynthesis (diacylglyceryl transfer). In terms of biological role, catalyzes the transfer of the diacylglyceryl group from phosphatidylglycerol to the sulfhydryl group of the N-terminal cysteine of a prolipoprotein, the first step in the formation of mature lipoproteins. The polypeptide is Phosphatidylglycerol--prolipoprotein diacylglyceryl transferase (Staphylococcus carnosus (strain TM300)).